The sequence spans 357 residues: GTPase Obg (357 aa).

The region spanning 1–159 is the Obg domain; the sequence is MKFVDEAFID…RNLKLELKVL (159 aa). Residues 160 to 334 form the OBG-type G domain; that stretch reads ADVGLLGMPN…LVQSIFQHVH (175 aa). GTP contacts are provided by residues 166–173, 191–195, 213–216, 284–287, and 315–317; these read GMPNAGKS, FTTLH, DIPG, NKLD, and SAL. Mg(2+) is bound by residues Ser173 and Thr193.

It belongs to the TRAFAC class OBG-HflX-like GTPase superfamily. OBG GTPase family. Monomer. Mg(2+) is required as a cofactor.

Its subcellular location is the cytoplasm. An essential GTPase which binds GTP, GDP and possibly (p)ppGpp with moderate affinity, with high nucleotide exchange rates and a fairly low GTP hydrolysis rate. Plays a role in control of the cell cycle, stress response, ribosome biogenesis and in those bacteria that undergo differentiation, in morphogenesis control. This Acidovorax ebreus (strain TPSY) (Diaphorobacter sp. (strain TPSY)) protein is GTPase Obg.